The following is an 879-amino-acid chain: Alanine--tRNA ligase (879 aa).

Zn(2+) is bound by residues H570, H574, C672, and H676.

This sequence belongs to the class-II aminoacyl-tRNA synthetase family. Zn(2+) serves as cofactor.

It localises to the cytoplasm. It catalyses the reaction tRNA(Ala) + L-alanine + ATP = L-alanyl-tRNA(Ala) + AMP + diphosphate. In terms of biological role, catalyzes the attachment of alanine to tRNA(Ala) in a two-step reaction: alanine is first activated by ATP to form Ala-AMP and then transferred to the acceptor end of tRNA(Ala). Also edits incorrectly charged Ser-tRNA(Ala) and Gly-tRNA(Ala) via its editing domain. In Nitratidesulfovibrio vulgaris (strain ATCC 29579 / DSM 644 / CCUG 34227 / NCIMB 8303 / VKM B-1760 / Hildenborough) (Desulfovibrio vulgaris), this protein is Alanine--tRNA ligase.